A 500-amino-acid chain; its full sequence is Glycerol kinase (500 aa).

Residue Thr-11 participates in ADP binding. Residues Thr-11, Thr-12, and Ser-13 each contribute to the ATP site. Thr-11 contributes to the sn-glycerol 3-phosphate binding site. An ADP-binding site is contributed by Arg-15. Sn-glycerol 3-phosphate contacts are provided by Arg-81, Glu-82, Tyr-133, and Asp-242. Arg-81, Glu-82, Tyr-133, Asp-242, and Gln-243 together coordinate glycerol. 2 residues coordinate ADP: Thr-264 and Gly-307. ATP is bound by residues Thr-264, Gly-307, Gln-311, and Gly-411. Gly-411 contributes to the ADP binding site.

It belongs to the FGGY kinase family.

The catalysed reaction is glycerol + ATP = sn-glycerol 3-phosphate + ADP + H(+). It participates in polyol metabolism; glycerol degradation via glycerol kinase pathway; sn-glycerol 3-phosphate from glycerol: step 1/1. Its activity is regulated as follows. Inhibited by fructose 1,6-bisphosphate (FBP). Its function is as follows. Key enzyme in the regulation of glycerol uptake and metabolism. Catalyzes the phosphorylation of glycerol to yield sn-glycerol 3-phosphate. This chain is Glycerol kinase, found in Rhodopseudomonas palustris (strain ATCC BAA-98 / CGA009).